The primary structure comprises 545 residues: Calcium-dependent protein kinase 6 (545 aa).

G2 carries N-myristoyl glycine lipidation. The span at 34-43 (CSSTSTATSS) shows a compositional bias: low complexity. Residues 34–58 (CSSTSTATSSGGRMPIRSHQQRLSS) are disordered. One can recognise a Protein kinase domain in the interval 74–332 (YTVGRKLGQG…AHQVLCHPWV (259 aa)). Residues 80–88 (LGQGQFGTT) and K103 contribute to the ATP site. Residue D198 is the Proton acceptor of the active site. Residues 338–368 (APDRPLAPAVLSRLKQFSAMNRLKKMALRVI) form an autoinhibitory domain region. EF-hand domains follow at residues 375–410 (EELAGLKEMFKAMDTDASGAITFDELKEGLRRYGSN), 411–446 (LREAEIRDLMDAADVDKSGTIDYDEFIAATVHLNKL), 447–482 (EREEHLLAAFAYFDRDGSGYITVDELEHACRDHNMA), and 486–516 (IDDIIREVDQDNDGRIDYGEFVAMMKKGAID). 19 residues coordinate Ca(2+): D388, D390, S392, E399, D424, D426, S428, T430, E435, D460, D462, S464, Y466, E471, D494, D496, D498, R500, and E505. Residues 526–545 (GRPTTATSDDPSPTISSSSR) form a disordered region. The segment covering 528-545 (PTTATSDDPSPTISSSSR) has biased composition (low complexity).

It belongs to the protein kinase superfamily. Ser/Thr protein kinase family. CDPK subfamily.

Its subcellular location is the membrane. It catalyses the reaction L-seryl-[protein] + ATP = O-phospho-L-seryl-[protein] + ADP + H(+). It carries out the reaction L-threonyl-[protein] + ATP = O-phospho-L-threonyl-[protein] + ADP + H(+). Its activity is regulated as follows. Activated by calcium. Autophosphorylation may play an important role in the regulation of the kinase activity. May play a role in signal transduction pathways that involve calcium as a second messenger. The polypeptide is Calcium-dependent protein kinase 6 (Oryza sativa subsp. japonica (Rice)).